A 1095-amino-acid polypeptide reads, in one-letter code: Solute carrier family 12 member 1 (1095 aa).

Over 1–173 (MSVSIPSNSV…EEDMTGVVKF (173 aa)) the chain is Cytoplasmic. The RFXV motif signature appears at 16–19 (RFQV). The segment at 29–49 (AAAVGDSADPPHYEETSFGDE) is disordered. Residues Ser-57 and Ser-87 each carry the phosphoserine modification. Residues Thr-91, Thr-96, Thr-101, and Thr-114 each carry the phosphothreonine modification. Position 116 is a phosphoserine (Ser-116). Ser-126 bears the Phosphoserine; by AMPK mark. Ser-144 bears the Phosphoserine mark. The chain crosses the membrane as a helical span at residues 174-194 (GWVKGVLVRCMLNIWGVMLFI). The Extracellular portion of the chain corresponds to 195-197 (RLS). A helical membrane pass occupies residues 198-218 (WIVGEAGIGLGVLIILLSTMV). At 219 to 255 (TSITGLSTSAIATNGFVRGGGAYYLISRSLGPEFGGS) the chain is on the cytoplasmic side. The helical transmembrane segment at 256 to 276 (IGLIFAFANAVAVAMYVVGFA) threads the bilayer. The Extracellular segment spans residues 277–298 (ETVVDLLKESDSMMVDPTNDIR). A helical membrane pass occupies residues 299 to 319 (IIGSITVVILLGISVAGMEWE). Over 320–323 (AKAQ) the chain is Cytoplasmic. The helical transmembrane segment at 324 to 344 (VILLVILLIAIANFFIGTVIP) threads the bilayer. Topologically, residues 345–375 (SNNEKKSRGFFNYQASIFAENFGPSFTKGEG) are extracellular. The helical transmembrane segment at 376–396 (FFSVFAIFFPAATGILAGANI) threads the bilayer. Topologically, residues 397-413 (SGDLEDPQDAIPRGTML) are cytoplasmic. The chain crosses the membrane as a helical span at residues 414 to 434 (AIFITTVAYIGVAICVAACVV). Over 435–546 (RDATGSMNDT…NNEPLRGYFL (112 aa)) the chain is Extracellular. Asn-442 and Asn-452 each carry an N-linked (GlcNAc...) asparagine glycan. Transmembrane regions (helical) follow at residues 547–567 (TFVI…APII) and 568–588 (SNFF…ASYA). Over 589 to 605 (KSPGWRPAYGIYNMWVS) the chain is Extracellular. The helical transmembrane segment at 606-626 (LFGAILCCAVMFVINWWAAVI) threads the bilayer. Over 627–1095 (TYVIELFLYI…NHKNVLTFYS (469 aa)) the chain is Cytoplasmic.

This sequence belongs to the SLC12A transporter family. As to quaternary structure, when phosphorylated, interacts with PPP3CB. Phosphorylated at Ser-87, Thr-96 and Thr-101 by OXSR1/OSR1 and STK39/SPAK downstream of WNK kinases (WNK1, WNK2, WNK3 or WNK4), promoting its activity. Short-term cyclosporine administration increases SLC12A1 phosphorylation in kidney thick ascending limb, possibly through the inhibition of PPP3CB/calcineurin A beta phosphatase. Predominantly expressed in kidney (at protein level). In terms of tissue distribution, kidney-specific; most highly expressed in the outer stripe of outer medulla (at protein level). As to expression, kidney-specific; most highly expressed in the cortical thick ascending limb (at protein level). Kidney-specific; most highly expressed in the inner stripe of outer medulla (at protein level).

It localises to the apical cell membrane. The catalysed reaction is K(+)(out) + 2 chloride(out) + Na(+)(out) = K(+)(in) + 2 chloride(in) + Na(+)(in). Its activity is regulated as follows. Activated following phosphorylation by OXSR1/OSR1 and STK39/SPAK downstream of WNK kinases (WNK1, WNK2, WNK3 or WNK4). Inhibited by mercury dichloride and diuretic drug bumetaide. Inactive in isotonic conditions. Functionally, renal sodium, potassium and chloride ion cotransporter that mediates the transepithelial NaCl reabsorption in the thick ascending limb and plays an essential role in the urinary concentration and volume regulation. Electrically silent transporter system. Its function is as follows. High affinity, high capacity cotransporter for sodium, potassium and chloride ions, with a coupling ratio 1Na(+):1K(+):2Cl(-). High affinity, low capacity cotransporter for sodium, potassium and chloride ions, with a coupling ratio 1Na(+):1K(+):2Cl(-). In terms of biological role, low affinity, low capacity cotransporter for sodium, potassium and chloride ions, with a coupling ratio 1Na(+):1K(+):2Cl(-). In Mus musculus (Mouse), this protein is Solute carrier family 12 member 1 (Slc12a1).